Consider the following 640-residue polypeptide: UvrABC system protein C (640 aa).

Residues 22–101 (NDPGCYLMKD…IKSHQPYFNV (80 aa)) form the GIY-YIG domain. The UVR domain maps to 211 to 246 (DELRILLEKQMISFSESLKFEEAGSVRDQLKGIDRL).

The protein belongs to the UvrC family. In terms of assembly, interacts with UvrB in an incision complex.

Its subcellular location is the cytoplasm. In terms of biological role, the UvrABC repair system catalyzes the recognition and processing of DNA lesions. UvrC both incises the 5' and 3' sides of the lesion. The N-terminal half is responsible for the 3' incision and the C-terminal half is responsible for the 5' incision. This chain is UvrABC system protein C, found in Prochlorococcus marinus (strain NATL2A).